The following is a 457-amino-acid chain: Ribosome biogenesis protein YTM1 (457 aa).

The tract at residues 8–89 (VKVKFFTREK…ETTLTVEYTR (82 aa)) is ubiquitin-like (UBL) domain. Positions 99–457 (NFNNDDWVSA…INKGDNIFKN (359 aa)) are sufficient for interaction with ERB1 and association with 66S pre-ribosomes. 7 WD repeats span residues 101–140 (NNDD…EKQY), 142–180 (GHTG…GSVS), 203–241 (GHKA…MTAI), 282–322 (SHTG…CIDT), 324–363 (TTSY…SAKI), 370–410 (GHKN…PMYT), and 421–457 (GVND…IFKN). The tract at residues 172 to 191 (TKNDDGSVSNNTGDENDEEN) is disordered.

Belongs to the WD repeat WDR12/YTM1 family. As to quaternary structure, component of the NOP7 complex, composed of ERB1, NOP7 and YTM1. The complex is held together by ERB1, which interacts with NOP7 via its N-terminal domain and with YTM1 via a high-affinity interaction between the seven-bladed beta-propeller domains of the 2 proteins. The NOP7 complex associates with the 66S pre-ribosome. Interacts (via UBL domain) with MDN1 (via VWFA/MIDAS domain).

The protein resides in the nucleus. The protein localises to the nucleolus. It localises to the nucleoplasm. Component of the NOP7 complex, which is required for maturation of the 25S and 5.8S ribosomal RNAs and formation of the 60S ribosome. The sequence is that of Ribosome biogenesis protein YTM1 from Candida glabrata (strain ATCC 2001 / BCRC 20586 / JCM 3761 / NBRC 0622 / NRRL Y-65 / CBS 138) (Yeast).